The primary structure comprises 551 residues: L-lactate permease (551 aa).

12 helical membrane-spanning segments follow: residues Asn-13–Ile-33, Leu-37–Phe-57, Val-69–Phe-89, Gly-131–Phe-151, Leu-159–Val-179, Met-194–Met-214, Ile-245–Phe-265, Phe-306–Ala-326, Phe-366–Trp-386, Leu-405–Ser-425, Thr-438–Gly-458, and Ile-530–Ile-550.

This sequence belongs to the lactate permease family.

The protein localises to the cell inner membrane. The catalysed reaction is (S)-lactate(in) + H(+)(in) = (S)-lactate(out) + H(+)(out). It catalyses the reaction (R)-lactate(in) + H(+)(in) = (R)-lactate(out) + H(+)(out). It carries out the reaction glycolate(in) + H(+)(in) = glycolate(out) + H(+)(out). In terms of biological role, uptake of L-lactate across the membrane. Can also transport D-lactate and glycolate. Seems to be driven by a proton motive force. This is L-lactate permease (lldP) from Salmonella typhi.